A 292-amino-acid polypeptide reads, in one-letter code: Homeobox-leucine zipper protein HOX19 (292 aa).

Disordered regions lie at residues Leu14–Ser85, Arg99–Lys133, and Phe217–Pro236. A compositionally biased stretch (low complexity) spans Thr28–Ala74. The segment covering Arg99–Arg109 has biased composition (basic and acidic residues). A DNA-binding region (homeobox) is located at residues Ser124–Gln183. The segment at Lys182–Ala226 is leucine-zipper.

This sequence belongs to the HD-ZIP homeobox family. Class II subfamily. In terms of tissue distribution, expressed in seedlings, roots, stems, leaf sheaths and blades and panicles.

It is found in the nucleus. In terms of biological role, probable transcription factor. The protein is Homeobox-leucine zipper protein HOX19 (HOX19) of Oryza sativa subsp. japonica (Rice).